The chain runs to 176 residues: Ribosome maturation factor RimM (176 aa).

The region spanning 97–176 (EDEFYWRDLI…QILVDWDPDF (80 aa)) is the PRC barrel domain.

The protein belongs to the RimM family. As to quaternary structure, binds ribosomal protein uS19.

The protein resides in the cytoplasm. Its function is as follows. An accessory protein needed during the final step in the assembly of 30S ribosomal subunit, possibly for assembly of the head region. Essential for efficient processing of 16S rRNA. May be needed both before and after RbfA during the maturation of 16S rRNA. It has affinity for free ribosomal 30S subunits but not for 70S ribosomes. This chain is Ribosome maturation factor RimM, found in Shewanella halifaxensis (strain HAW-EB4).